A 484-amino-acid chain; its full sequence is Aldehyde dehydrogenase family 3 member A2 (484 aa).

The Cytoplasmic portion of the chain corresponds to 1 to 463 (MERQVQRLRQ…FLLKQFNKGR (463 aa)). NAD(+) is bound at residue 185–190 (GNTAVG). Residues glutamate 207 and cysteine 241 contribute to the active site. Serine 293 bears the Phosphoserine mark. Residues 464 to 484 (LQLLLLVCLVAVAAVIVKDQL) form a helical membrane-spanning segment. The short motif at 481–484 (KDQL) is the Prevents secretion from ER element.

The protein belongs to the aldehyde dehydrogenase family. Homodimer. Post-translationally, the N-terminus is blocked.

Its subcellular location is the microsome membrane. The protein localises to the endoplasmic reticulum membrane. The enzyme catalyses an aldehyde + NAD(+) + H2O = a carboxylate + NADH + 2 H(+). The catalysed reaction is a fatty aldehyde + NAD(+) + H2O = a fatty acid + NADH + 2 H(+). It catalyses the reaction (2E)-hexadecenal + NAD(+) + H2O = (E)-hexadec-2-enoate + NADH + 2 H(+). It carries out the reaction hexadecanoate + NADH + 2 H(+) = hexadecanal + NAD(+) + H2O. The enzyme catalyses 22-oxodocosanoate + NAD(+) + H2O = docosanedioate + NADH + 2 H(+). The catalysed reaction is 2,6,10,14-tetramethylpentadecanal + NAD(+) + H2O = 2,6,10,14-tetramethylpentadecanoate + NADH + 2 H(+). It catalyses the reaction octadecanal + NAD(+) + H2O = octadecanoate + NADH + 2 H(+). It carries out the reaction dodecanoate + NADH + 2 H(+) = dodecanal + NAD(+) + H2O. The enzyme catalyses decanal + NAD(+) + H2O = decanoate + NADH + 2 H(+). The catalysed reaction is tetradecanal + NAD(+) + H2O = tetradecanoate + NADH + 2 H(+). It catalyses the reaction octanal + NAD(+) + H2O = octanoate + NADH + 2 H(+). It carries out the reaction heptanal + NAD(+) + H2O = heptanoate + NADH + 2 H(+). The enzyme catalyses (2E,6E)-farnesal + NAD(+) + H2O = (2E,6E)-farnesoate + NADH + 2 H(+). Functionally, catalyzes the oxidation of medium and long-chain aliphatic aldehydes to fatty acids. Active on a variety of saturated and unsaturated aliphatic aldehydes between 6 and 24 carbons in length. Responsible for conversion of the sphingosine 1-phosphate (S1P) degradation product hexadecenal to hexadecenoic acid. This chain is Aldehyde dehydrogenase family 3 member A2 (Aldh3a2), found in Rattus norvegicus (Rat).